We begin with the raw amino-acid sequence, 88 residues long: MITKAKKAEIITRFGKSEKNTGDISVQIALLPEDIEKLKLHFEKNKKDKHSMRGFIAKVNKRKKLLNYLKEKNFASYKETIEALNIRK.

The protein belongs to the universal ribosomal protein uS15 family. In terms of assembly, part of the 30S ribosomal subunit. Forms a bridge to the 50S subunit in the 70S ribosome, contacting the 23S rRNA.

In terms of biological role, one of the primary rRNA binding proteins, it binds directly to 16S rRNA where it helps nucleate assembly of the platform of the 30S subunit by binding and bridging several RNA helices of the 16S rRNA. Functionally, forms an intersubunit bridge (bridge B4) with the 23S rRNA of the 50S subunit in the ribosome. The sequence is that of Small ribosomal subunit protein uS15 from Mesomycoplasma flocculare (Mycoplasma flocculare).